The chain runs to 1191 residues: Putative glycoside hydrolase 22789 (1191 aa).

Residues 173–187 (PSSSGASSVLPSPSA) show a composition bias toward low complexity. Residues 173-221 (PSSSGASSVLPSPSAHTPDAATDANHLPNPDPASGRQELTRAGRPARKK) form a disordered region.

The protein belongs to the glycoside hydrolase-like 3 (GHL3) family.

This chain is Putative glycoside hydrolase 22789, found in Monosiga brevicollis (Choanoflagellate).